The primary structure comprises 272 residues: tRNA pseudouridine synthase B (272 aa).

Asp-38 (nucleophile) is an active-site residue.

The protein belongs to the pseudouridine synthase TruB family. Type 1 subfamily.

It catalyses the reaction uridine(55) in tRNA = pseudouridine(55) in tRNA. In terms of biological role, responsible for synthesis of pseudouridine from uracil-55 in the psi GC loop of transfer RNAs. This is tRNA pseudouridine synthase B from Campylobacter jejuni subsp. jejuni serotype O:2 (strain ATCC 700819 / NCTC 11168).